The sequence spans 37 residues: Large ribosomal subunit protein bL36 (37 aa).

This sequence belongs to the bacterial ribosomal protein bL36 family.

In Borreliella afzelii (strain PKo) (Borrelia afzelii), this protein is Large ribosomal subunit protein bL36.